A 172-amino-acid polypeptide reads, in one-letter code: Small ribosomal subunit protein bS6 (172 aa).

Positions leucine 100–aspartate 172 are disordered. The segment covering lysine 107–aspartate 172 has biased composition (basic and acidic residues).

Belongs to the bacterial ribosomal protein bS6 family.

Binds together with bS18 to 16S ribosomal RNA. This Prochlorococcus marinus (strain MIT 9211) protein is Small ribosomal subunit protein bS6.